The following is a 275-amino-acid chain: Collectin-10 (275 aa).

An N-terminal signal peptide occupies residues 1–25 (MKYGKLWPIGVSVLGVIALHVRVLS). Asparagine 30 carries N-linked (GlcNAc...) asparagine glycosylation. Residues 39 to 76 (THTILPGPKGDDGEAGDTGVLGKLGKDGPKGQKGNKGI) form a disordered region. A Collagen-like domain is found at 51 to 110 (GEAGDTGVLGKLGKDGPKGQKGNKGIIGDSGDLGLIGKIGPIGSKGDKGHKGLPGLPGGK). A C-type lectin domain is found at 153 to 269 (TDEKYYYIVR…CSLTIYFVCE (117 aa)). 2 disulfides stabilise this stretch: cysteine 174–cysteine 268 and cysteine 246–cysteine 260.

This sequence belongs to the COLEC10/COLEC11 family.

The protein resides in the secreted. Functionally, lectin that binds to various sugars: galactose &gt; mannose = fucose &gt; N-acetylglucosamine &gt; N-acetylgalactosamine. The chain is Collectin-10 (colec10) from Xenopus tropicalis (Western clawed frog).